The chain runs to 417 residues: Argininosuccinate synthase (417 aa).

A8–S16 lines the ATP pocket. Residue Y87 coordinates L-citrulline. G117 provides a ligand contact to ATP. L-aspartate-binding residues include T119, N123, and D124. N123 provides a ligand contact to L-citrulline. L-citrulline-binding residues include R127, S175, E259, and Y271.

It belongs to the argininosuccinate synthase family. Type 1 subfamily. As to quaternary structure, homotetramer.

The protein localises to the cytoplasm. The enzyme catalyses L-citrulline + L-aspartate + ATP = 2-(N(omega)-L-arginino)succinate + AMP + diphosphate + H(+). Its pathway is amino-acid biosynthesis; L-arginine biosynthesis; L-arginine from L-ornithine and carbamoyl phosphate: step 2/3. This is Argininosuccinate synthase from Clavibacter sepedonicus (Clavibacter michiganensis subsp. sepedonicus).